Reading from the N-terminus, the 512-residue chain is Mesoderm induction early response protein 1 (512 aa).

Positions 1–16 are enriched in low complexity; sequence MAEPSVESSSPGGSAT. 2 disordered regions span residues 1–63 and 75–173; these read MAEP…REGD and YGST…EDYI. Serine 10 carries the phosphoserine modification. Positions 17 to 36 are enriched in basic and acidic residues; sequence SDDHEFDPSADMLVHDFDDE. 2 stretches are compositionally biased toward acidic residues: residues 37–46 and 83–105; these read RTLEEEEMME and EEDEEEEEEEEEGEDDEDADNDD. Residues 129-144 show a composition bias toward polar residues; that stretch reads QSSNDDPSQSVASQDA. Serine 141 is modified (phosphoserine). At tyrosine 155 the chain carries Phosphotyrosine. Phosphoserine occurs at positions 160 and 166. Over residues 160-173 the composition is skewed to acidic residues; sequence SEVEEESEEDEDYI. The ELM2 domain occupies 180 to 278; the sequence is KEIMVGSMFQ…EALRRLRFNV (99 aa). The segment at 180 to 284 is interaction with HDAC1; the sequence is KEIMVGSMFQ…RFNVKAAREE (105 aa). Lysine 239 is covalently cross-linked (Glycyl lysine isopeptide (Lys-Gly) (interchain with G-Cter in SUMO2)). One can recognise an SANT domain in the interval 283-335; it reads EELSVWTEEECRNFEQGLKAYGKDFHLIQANKVRTRSVGECVAFYYMWKKSER. Residues 366 to 512 form a disordered region; that stretch reads ESESAASSRA…KFEELENTDD (147 aa). Serine 367, serine 369, and serine 377 each carry phosphoserine. Residues 396–409 are compositionally biased toward polar residues; sequence TVSTANQNGVSSNG. Residues 414-423 show a composition bias toward basic and acidic residues; the sequence is LNKEEVKVEG. Lysine 420 is covalently cross-linked (Glycyl lysine isopeptide (Lys-Gly) (interchain with G-Cter in SUMO2)). Threonine 448 carries the phosphothreonine modification. The segment covering 462 to 475 has biased composition (basic and acidic residues); that stretch reads ARNENDFDEKSERP. Residues 482–494 show a composition bias toward polar residues; it reads NSNGKESPGSSEF. Phosphoserine is present on residues serine 483, serine 488, and serine 491.

As to quaternary structure, interacts with HDAC1. Part of a complex containing at least CDYL, MIER1, MIER2, HDAC1 and HDAC2. In terms of tissue distribution, ubiquitously expressed, but at very low levels. However, consistent level of expression are observed in heart, testis, thyroid, ovary and adrenal gland. Transcripts are up-regulated in breast carcinoma cell lines and tumor.

It is found in the nucleus. The protein resides in the cytoplasm. Transcriptional repressor regulating the expression of a number of genes including SP1 target genes. Probably functions through recruitment of HDAC1 a histone deacetylase involved in chromatin silencing. In Homo sapiens (Human), this protein is Mesoderm induction early response protein 1 (MIER1).